A 146-amino-acid polypeptide reads, in one-letter code: Anti-sigma F factor (146 aa).

Belongs to the anti-sigma-factor family.

The enzyme catalyses L-seryl-[protein] + ATP = O-phospho-L-seryl-[protein] + ADP + H(+). It carries out the reaction L-threonyl-[protein] + ATP = O-phospho-L-threonyl-[protein] + ADP + H(+). Binds to sigma F and blocks its ability to form an RNA polymerase holoenzyme (E-sigma F). Phosphorylates SpoIIAA on a serine residue. This phosphorylation may enable SpoIIAA to act as an anti-anti-sigma factor that counteracts SpoIIAB and thus releases sigma F from inhibition. In Geobacillus sp. (strain WCH70), this protein is Anti-sigma F factor.